Reading from the N-terminus, the 549-residue chain is Hydroxylamine reductase (549 aa).

4 residues coordinate [4Fe-4S] cluster: C5, C8, C17, and C23. Residues H250, E274, C318, C404, C432, C457, E491, and K493 each coordinate hybrid [4Fe-2O-2S] cluster. Residue C404 is modified to Cysteine persulfide.

It belongs to the HCP family. It depends on [4Fe-4S] cluster as a cofactor. The cofactor is hybrid [4Fe-2O-2S] cluster.

It localises to the cytoplasm. It catalyses the reaction A + NH4(+) + H2O = hydroxylamine + AH2 + H(+). In terms of biological role, catalyzes the reduction of hydroxylamine to form NH(3) and H(2)O. The protein is Hydroxylamine reductase of Geobacter metallireducens (strain ATCC 53774 / DSM 7210 / GS-15).